Here is a 275-residue protein sequence, read N- to C-terminus: Putative phosphoenolpyruvate synthase regulatory protein (275 aa).

Glycine 157 to threonine 164 lines the ADP pocket.

The protein belongs to the pyruvate, phosphate/water dikinase regulatory protein family. PSRP subfamily.

It carries out the reaction [pyruvate, water dikinase] + ADP = [pyruvate, water dikinase]-phosphate + AMP + H(+). It catalyses the reaction [pyruvate, water dikinase]-phosphate + phosphate + H(+) = [pyruvate, water dikinase] + diphosphate. Functionally, bifunctional serine/threonine kinase and phosphorylase involved in the regulation of the phosphoenolpyruvate synthase (PEPS) by catalyzing its phosphorylation/dephosphorylation. In Bordetella bronchiseptica (strain ATCC BAA-588 / NCTC 13252 / RB50) (Alcaligenes bronchisepticus), this protein is Putative phosphoenolpyruvate synthase regulatory protein.